The chain runs to 487 residues: Glutamyl-tRNA(Gln) amidotransferase subunit A (487 aa).

Residues lysine 78 and serine 153 each act as charge relay system in the active site. The Acyl-ester intermediate role is filled by serine 177.

Belongs to the amidase family. GatA subfamily. As to quaternary structure, heterotrimer of A, B and C subunits.

It carries out the reaction L-glutamyl-tRNA(Gln) + L-glutamine + ATP + H2O = L-glutaminyl-tRNA(Gln) + L-glutamate + ADP + phosphate + H(+). In terms of biological role, allows the formation of correctly charged Gln-tRNA(Gln) through the transamidation of misacylated Glu-tRNA(Gln) in organisms which lack glutaminyl-tRNA synthetase. The reaction takes place in the presence of glutamine and ATP through an activated gamma-phospho-Glu-tRNA(Gln). The sequence is that of Glutamyl-tRNA(Gln) amidotransferase subunit A from Oenococcus oeni (strain ATCC BAA-331 / PSU-1).